Here is a 73-residue protein sequence, read N- to C-terminus: Putative membrane protein insertion efficiency factor (73 aa).

Belongs to the UPF0161 family.

Its subcellular location is the cell inner membrane. Its function is as follows. Could be involved in insertion of integral membrane proteins into the membrane. In Neisseria meningitidis serogroup C / serotype 2a (strain ATCC 700532 / DSM 15464 / FAM18), this protein is Putative membrane protein insertion efficiency factor.